Reading from the N-terminus, the 394-residue chain is Elongation factor Tu 2 (394 aa).

Positions 10-204 (KPHVNVGTIG…ALDSYIPEPE (195 aa)) constitute a tr-type G domain. The tract at residues 19–26 (GHVDHGKT) is G1. GTP is bound at residue 19-26 (GHVDHGKT). Thr-26 is a Mg(2+) binding site. Residues 60-64 (GITIN) are G2. The segment at 81 to 84 (DCPG) is G3. GTP is bound by residues 81 to 85 (DCPGH) and 136 to 139 (NKCD). The interval 136–139 (NKCD) is G4. The segment at 174 to 176 (SAL) is G5.

Belongs to the TRAFAC class translation factor GTPase superfamily. Classic translation factor GTPase family. EF-Tu/EF-1A subfamily. Monomer.

Its subcellular location is the cytoplasm. The catalysed reaction is GTP + H2O = GDP + phosphate + H(+). In terms of biological role, GTP hydrolase that promotes the GTP-dependent binding of aminoacyl-tRNA to the A-site of ribosomes during protein biosynthesis. The sequence is that of Elongation factor Tu 2 from Shewanella loihica (strain ATCC BAA-1088 / PV-4).